Consider the following 410-residue polypeptide: Mitochondrial potassium channel (410 aa).

A mitochondrion-targeting transit peptide spans 1–35; the sequence is MTGCSPVFTMQQVVGVSHRLVWRTFRGTDLLMTRT. Topologically, residues 36–201 are mitochondrial matrix; it reads LCSPGPSRPG…KERTRAERTK (166 aa). Residues 116–143 are a coiled coil; that stretch reads VREAREDLEAQQTKLKEVRDRLDRVSRE. A helical membrane pass occupies residues 202–222; it reads NWSLIGSVLGALIGVAGSTYV. The Mitochondrial intermembrane segment spans residues 223-385; it reads NRVRLQELKA…RLEAQANRNA (163 aa). The interval 276–296 is disordered; it reads GQDQGSGSPTGPSSPRGKDID. A compositionally biased stretch (low complexity) spans 280–290; it reads GSGSPTGPSSP. A helical transmembrane segment spans residues 386 to 406; that stretch reads ISSTLVTCVTFMATLPLLYML. Residues 407–410 lie on the Mitochondrial matrix side of the membrane; that stretch reads FKTS.

The mitochondrial potassium channel (mitoK(ATP)) forms a heteromultimer.

The protein localises to the mitochondrion inner membrane. The catalysed reaction is K(+)(in) = K(+)(out). Channel activity inhibited by ATP via ABCB8/MITOSUR subunit. Functionally, pore-forming subunit of the mitochondrial ATP-gated potassium channel (mitoK(ATP)). Together with ATP-binding subunit ABCB8/MITOSUR of the mitoK(ATP) channel, mediates ATP-dependent K(+) currents across the mitochondrial inner membrane. An increase in ATP intracellular levels closes the channel, inhibiting K(+) transport, whereas a decrease in ATP levels enhances K(+) uptake in the mitochondrial matrix. May contribute to the homeostatic control of cellular metabolism under stress conditions by regulating the mitochondrial matrix volume. This chain is Mitochondrial potassium channel, found in Rattus norvegicus (Rat).